Reading from the N-terminus, the 126-residue chain is Small ribosomal subunit protein eS6 (126 aa).

Belongs to the eukaryotic ribosomal protein eS6 family.

In Methanothermobacter thermautotrophicus (strain ATCC 29096 / DSM 1053 / JCM 10044 / NBRC 100330 / Delta H) (Methanobacterium thermoautotrophicum), this protein is Small ribosomal subunit protein eS6.